A 67-amino-acid chain; its full sequence is Large ribosomal subunit protein bL35 (67 aa).

The protein belongs to the bacterial ribosomal protein bL35 family.

The protein is Large ribosomal subunit protein bL35 of Sinorhizobium fredii (strain NBRC 101917 / NGR234).